We begin with the raw amino-acid sequence, 190 residues long: Interferon alpha-9 (190 aa).

A signal peptide spans 1-23 (MARPFAFLMVLVVISYWSTCSLG). 2 cysteine pairs are disulfide-bonded: cysteine 24-cysteine 122 and cysteine 52-cysteine 162. Asparagine 101 carries an N-linked (GlcNAc...) asparagine glycan.

Belongs to the alpha/beta interferon family.

Its subcellular location is the secreted. Its function is as follows. Produced by macrophages, IFN-alpha have antiviral activities. Interferon stimulates the production of two enzymes: a protein kinase and an oligoadenylate synthetase. In Mus musculus (Mouse), this protein is Interferon alpha-9 (Ifna9).